The sequence spans 171 residues: MWRRIVSSHLKSISAVGSCAAPSCRHAVVESTHLSLSTRASSIPAYSSIFSRLIGSAAADTAVKKRVEDVMPIATGHEKEELQAELEGRKLDDIDFPEGPFGTKEAPAVVKSYYDMRIVGCPGGEGEDEHDVVWFWLEKGKSFECPVCTQYFKLEVVGPGGPPDGHGDDHH.

A mitochondrion-targeting transit peptide spans 1–54; sequence MWRRIVSSHLKSISAVGSCAAPSCRHAVVESTHLSLSTRASSIPAYSSIFSRLI. The Zn(2+) site is built by Cys121, Cys145, and Cys148.

It belongs to the cytochrome c oxidase subunit 5B (TC 3.D.4.11) family.

Its subcellular location is the mitochondrion inner membrane. Functionally, this protein is one of the nuclear-coded polypeptide chains of cytochrome c oxidase, the terminal oxidase in mitochondrial electron transport. In Arabidopsis thaliana (Mouse-ear cress), this protein is Cytochrome c oxidase subunit 5b-2, mitochondrial (COX5B-2).